A 425-amino-acid polypeptide reads, in one-letter code: NAC transcription factor ONAC010 (425 aa).

A compositionally biased stretch (polar residues) spans 1-10; that stretch reads MESPDSSSGS. The tract at residues 1-34 is disordered; sequence MESPDSSSGSAPPRVLRRQQQQPGSAPELPPGFR. Positions 12 to 23 are enriched in low complexity; it reads PPRVLRRQQQQP. The NAC domain maps to 29 to 200; the sequence is LPPGFRFHPT…DWVLCRIYKK (172 aa). Residues 129–206 mediate DNA binding; the sequence is VGVKKALVFY…IYKKTNKAGA (78 aa).

The protein resides in the nucleus. Transcription factor of the NAC family associated with male fertility. This is NAC transcription factor ONAC010 (ONAC010) from Oryza sativa subsp. indica (Rice).